Reading from the N-terminus, the 2368-residue chain is Highly reducing polyketide synthase cla2 (2368 aa).

The region spanning 10–434 (QIPIAIVGLG…GTNGLVVLEA (425 aa)) is the Ketosynthase family 3 (KS3) domain. Active-site for beta-ketoacyl synthase activity residues include cysteine 182, histidine 317, and histidine 357. Residues 548–877 (FVFTGQGAQW…RGQNALDTSL (330 aa)) are malonyl-CoA:ACP transacylase (MAT) domain. Catalysis depends on serine 638, which acts as the For malonyltransferase activity. The tract at residues 936-1071 (HSMIGLKQPM…GLVAIEYTNK (136 aa)) is N-terminal hotdog fold. Positions 936 to 1175 (HSMIGLKQPM…AIFQSIFGST (240 aa)) are dehydratase (DH) domain. One can recognise a PKS/mFAS DH domain in the interval 936-1255 (HSMIGLKQPM…MTEPEVGDDA (320 aa)). The active-site Proton acceptor; for dehydratase activity is histidine 968. Residues 1099–1255 (PLMIRREKFY…MTEPEVGDDA (157 aa)) are C-terminal hotdog fold. Residue aspartate 1165 is the Proton donor; for dehydratase activity of the active site. The tract at residues 1655-1967 (GFLDSLQFIK…QGKHRGKLVL (313 aa)) is enoylreductase (ER) domain. A catalytic ketoreductase (KRc) domain region spans residues 1991–2170 (ATYLIIGGLG…AVAVNLTIIR (180 aa)). One can recognise a Carrier domain in the interval 2283 to 2360 (QASEIITEGL…VLAKTIASRS (78 aa)). At serine 2320 the chain carries O-(pantetheine 4'-phosphoryl)serine.

Its pathway is secondary metabolite biosynthesis. Highly reducing polyketide synthase; part of the gene cluster that mediates the biosynthesis of cladosporin, a tricyclic octaketide that acts as an antimalarial agent though inhibition of the Plasmodium falciparum lysyl-tRNA synthetase. The highly reducing polyketide synthase cla2 is responsible for biosynthesis up to the pentaketide stage, including of the tetrahydropyran (THP) ring, whereas the three subsequent ketide extensions with no reduction are catalyzed by the non-reducing polyketide synthase cla3. The protein is Highly reducing polyketide synthase cla2 of Cladosporium cladosporioides.